Here is a 121-residue protein sequence, read N- to C-terminus: Basic phospholipase A2 homolog textilotoxin B chain (121 aa).

Intrachain disulfides connect cysteine 11–cysteine 72, cysteine 27–cysteine 120, cysteine 29–cysteine 45, cysteine 44–cysteine 101, cysteine 51–cysteine 94, cysteine 61–cysteine 87, and cysteine 80–cysteine 92.

This sequence belongs to the phospholipase A2 family. Group I subfamily. N49 sub-subfamily. Heterohexamer. 2 forms exist: 2 A or 2 B chains, 2 C chains and 2 covalently-linked D chains, and 1 A or 1 B, 1 C, 2 covalently-linked D chains and 2 differentially glycosylated covalently-linked D chains. Textilotoxin was originally described as pentameric. In terms of tissue distribution, expressed by the venom gland.

It localises to the secreted. Snake venom oligomeric phospholipase A2 that has potent presynaptic neurotoxicity. Chain B is not itself neurotoxic, but it is essential for the neurotoxicity of textilotoxin. Subunit B possesses a very low phospholipase activity. The chain is Basic phospholipase A2 homolog textilotoxin B chain from Pseudonaja textilis (Eastern brown snake).